The sequence spans 334 residues: Holliday junction branch migration complex subunit RuvB (334 aa).

The interval 1 to 182 (MNERMVDQSM…FGVHLRLEYY (182 aa)) is large ATPase domain (RuvB-L). ATP is bound by residues Leu-21, Arg-22, Gly-63, Lys-66, Thr-67, Thr-68, 129-131 (EDF), Arg-172, Tyr-182, and Arg-219. Mg(2+) is bound at residue Thr-67. The interval 183–253 (NESDLKEIII…TTKHALGLLQ (71 aa)) is small ATPAse domain (RuvB-S). Positions 256 to 334 (QHGLDYIDHK…HFAKSNEERE (79 aa)) are head domain (RuvB-H). DNA-binding residues include Arg-292, Arg-311, and Arg-316.

The protein belongs to the RuvB family. As to quaternary structure, homohexamer. Forms an RuvA(8)-RuvB(12)-Holliday junction (HJ) complex. HJ DNA is sandwiched between 2 RuvA tetramers; dsDNA enters through RuvA and exits via RuvB. An RuvB hexamer assembles on each DNA strand where it exits the tetramer. Each RuvB hexamer is contacted by two RuvA subunits (via domain III) on 2 adjacent RuvB subunits; this complex drives branch migration. In the full resolvosome a probable DNA-RuvA(4)-RuvB(12)-RuvC(2) complex forms which resolves the HJ.

It localises to the cytoplasm. It catalyses the reaction ATP + H2O = ADP + phosphate + H(+). In terms of biological role, the RuvA-RuvB-RuvC complex processes Holliday junction (HJ) DNA during genetic recombination and DNA repair, while the RuvA-RuvB complex plays an important role in the rescue of blocked DNA replication forks via replication fork reversal (RFR). RuvA specifically binds to HJ cruciform DNA, conferring on it an open structure. The RuvB hexamer acts as an ATP-dependent pump, pulling dsDNA into and through the RuvAB complex. RuvB forms 2 homohexamers on either side of HJ DNA bound by 1 or 2 RuvA tetramers; 4 subunits per hexamer contact DNA at a time. Coordinated motions by a converter formed by DNA-disengaged RuvB subunits stimulates ATP hydrolysis and nucleotide exchange. Immobilization of the converter enables RuvB to convert the ATP-contained energy into a lever motion, pulling 2 nucleotides of DNA out of the RuvA tetramer per ATP hydrolyzed, thus driving DNA branch migration. The RuvB motors rotate together with the DNA substrate, which together with the progressing nucleotide cycle form the mechanistic basis for DNA recombination by continuous HJ branch migration. Branch migration allows RuvC to scan DNA until it finds its consensus sequence, where it cleaves and resolves cruciform DNA. In Staphylococcus aureus (strain bovine RF122 / ET3-1), this protein is Holliday junction branch migration complex subunit RuvB.